We begin with the raw amino-acid sequence, 127 residues long: Small ribosomal subunit protein uS11 (127 aa).

The protein belongs to the universal ribosomal protein uS11 family. In terms of assembly, part of the 30S ribosomal subunit.

Functionally, located on the platform of the 30S subunit. The polypeptide is Small ribosomal subunit protein uS11 (Natronomonas pharaonis (strain ATCC 35678 / DSM 2160 / CIP 103997 / JCM 8858 / NBRC 14720 / NCIMB 2260 / Gabara) (Halobacterium pharaonis)).